The chain runs to 191 residues: Calcium and integrin-binding protein 1 (191 aa).

The N-myristoyl glycine moiety is linked to residue Gly2. EF-hand domains follow at residues 103–138 (TPDI…LTGE) and 148–183 (EMKQ…SPDF). The Ca(2+) site is built by Asp116, Asp118, Asp120, Thr122, Asp127, Asp161, Asp163, Asp165, Thr167, and Glu172.

Monomer. Interacts with the heterodimeric integrin alpha-IIb/beta3 (ITGA2B-ITGB3). Interacts with ITGA2B (via cytoplasmic domain); the interaction is direct and calcium-dependent. Interacts with the protein kinases PLK2/SNK and PRKDC (via the region immediately upstream of the kinase domain). Interacts with PLK3; the interaction inhibits PLK3 kinase activity. Interacts with PSEN2. Interacts (via C-terminus) with F8. Interacts with NBR1 (via C-terminus). Interacts with FEZ1 (via C-terminus). Interacts with UBR5 (via C-terminus); the interaction is sensitive to DNA damage, and may target CIB1 for ubiquitin-mediated degradation. Interacts with IFI6; the interaction is direct. Interacts with BCL2. Interacts with TAS1R2 (via C-terminus); the interaction is independent of the myristoylation state of CIB1. Interacts with ITPR3; the interaction occurs in a calcium dependent manner. Interacts with PTK2/FAK1. Interacts with MAP3K5; the interaction inhibits MAP3K5 activation by phosphorylation, and its subsequent interaction with TRAF2. Interacts (via C-terminal region) with STMN2 (via the N-terminal region); the interaction is direct, occurs in a calcium-dependent manner and attenuates the STMN2-induced neurite outgrowth inhibition. Interacts with SPHK1, the interaction occurs in a calcium-dependent manner. Interacts with ITGA2B (via C-terminal cytoplasmic tail); the interaction occurs upon platelet aggregation and is stabilized/increased in a calcium and magnesium-dependent manner. Interacts with PAK1 (via N-terminal region); the interaction is direct and occurs in a calcium-dependent manner. Interacts with RAC3 (via C-terminal region); the interaction induces their association with the cytoskeleton upon alpha-IIb/beta3 integrin-mediated adhesion. Interacts with ITGA5 and ITGAV. Interacts with MYO1C. Interacts with ITGA2B (via C-terminal cytoplasmic tail region). Interacts (via C-terminal region) with PPP3R1 isoform 1 and isoform 2; the interactions increase upon cardiomyocytes hypertrophy. Interacts with CACNA1C; the interaction increases upon cardiomyocytes hypertrophy. Interacts and forms a complex with TMC6 and TMC8; the interaction stabilizes each component of the complex. As to expression, expressed strongly in Sertoli cells, weakly in pachytene spermatocytes, round spermatids and condensing spermatids (at protein level). Expressed in testis. Expressed in cardiac myocytes and endothelial cells. Expressed in heart, liver, spleen, lung, kidney, brain and inner ear. In the inner ear, expressed in the vestibule, basilar membrane and spiral ganglion cells.

It localises to the membrane. It is found in the cell membrane. The protein localises to the sarcolemma. Its subcellular location is the apical cell membrane. The protein resides in the cell projection. It localises to the ruffle membrane. It is found in the filopodium tip. The protein localises to the growth cone. Its subcellular location is the lamellipodium. The protein resides in the cytoplasm. It localises to the cytoskeleton. It is found in the microtubule organizing center. The protein localises to the centrosome. Its subcellular location is the perinuclear region. The protein resides in the nucleus. It localises to the neuron projection. It is found in the perikaryon. Calcium-binding protein that plays a role in the regulation of numerous cellular processes, such as cell differentiation, cell division, cell proliferation, cell migration, thrombosis, angiogenesis, cardiac hypertrophy and apoptosis. Involved in bone marrow megakaryocyte differentiation by negatively regulating thrombopoietin-mediated signaling pathway. Participates in the endomitotic cell cycle of megakaryocyte, a form of mitosis in which both karyokinesis and cytokinesis are interrupted. Plays a role in integrin signaling by negatively regulating alpha-IIb/beta3 activation in thrombin-stimulated megakaryocytes preventing platelet aggregation. Up-regulates PTK2/FAK1 activity, and is also needed for the recruitment of PTK2/FAK1 to focal adhesions; it thus appears to play an important role in focal adhesion formation. Positively regulates cell migration on fibronectin in a CDC42-dependent manner, the effect being negatively regulated by PAK1. Functions as a negative regulator of stress activated MAP kinase (MAPK) signaling pathways. Down-regulates inositol 1,4,5-trisphosphate receptor-dependent calcium signaling. Involved in sphingosine kinase SPHK1 translocation to the plasma membrane in a N-myristoylation-dependent manner preventing TNF-alpha-induced apoptosis. Regulates serine/threonine-protein kinase PLK3 activity for proper completion of cell division progression. Plays a role in microtubule (MT) dynamics during neuronal development; disrupts the MT depolymerization activity of STMN2 attenuating NGF-induced neurite outgrowth and the MT reorganization at the edge of lamellipodia. Promotes cardiomyocyte hypertrophy via activation of the calcineurin/NFAT signaling pathway. Stimulates calcineurin PPP3R1 activity by mediating its anchoring to the sarcolemma. In ischemia-induced (pathological or adaptive) angiogenesis, stimulates endothelial cell proliferation, migration and microvessel formation by activating the PAK1 and ERK1/ERK2 signaling pathway. Also promotes cancer cell survival and proliferation. May regulate cell cycle and differentiation of spermatogenic germ cells, and/or differentiation of supporting Sertoli cells. Forms a complex with TMC6/EVER1 and TMC8/EVER2 in lymphocytes and keratynocytes where CIB1 stabilizes TMC6 and TMC8 levels and reciprocally. The chain is Calcium and integrin-binding protein 1 (Cib1) from Mus musculus (Mouse).